The primary structure comprises 295 residues: Cutinase 11 (295 aa).

A signal peptide spans 1–17 (MQTSALLLAAQALVASA). A disulfide bridge links C25 with C102. Residues S113, D198, and H210 contribute to the active site. An intrachain disulfide couples C184 to C202. A disordered region spans residues 228 to 258 (KLNSGGSPPTTPPTTPPTTPPTTPPTTPPPS). The segment covering 236–258 (PTTPPTTPPTTPPTTPPTTPPPS) has biased composition (pro residues). Residues 260-295 (SCAALYGQCGGQGWNGATCCSQGTCRASNQWYSQCL) enclose the CBM1 domain.

The protein belongs to the cutinase family. The 2 disulfide bonds play a critical role in holding the catalytic residues in juxta-position; reduction of the disulfide bridges results in the complete inactivation of the enzyme.

The protein resides in the secreted. The enzyme catalyses cutin + H2O = cutin monomers.. In terms of biological role, catalyzes the hydrolysis of complex carboxylic polyesters found in the cell wall of plants. May degrade cutin, a macromolecule that forms the structure of the plant cuticle. May also degrade suberin, a specialized macromolecule found in the cell wall of various plant tissues. Allows pathogenic fungi to penetrate through the cuticular barrier into the host plant during the initial stage of fungal infection. Involved in pathogenesis. This chain is Cutinase 11, found in Verticillium dahliae (Verticillium wilt).